We begin with the raw amino-acid sequence, 431 residues long: Trigger factor (431 aa).

One can recognise a PPIase FKBP-type domain in the interval 164–249 (GDIAVIDFKG…IKEIKRKELP (86 aa)).

It belongs to the FKBP-type PPIase family. Tig subfamily.

It localises to the cytoplasm. The enzyme catalyses [protein]-peptidylproline (omega=180) = [protein]-peptidylproline (omega=0). Involved in protein export. Acts as a chaperone by maintaining the newly synthesized protein in an open conformation. Functions as a peptidyl-prolyl cis-trans isomerase. The polypeptide is Trigger factor (Clostridium acetobutylicum (strain ATCC 824 / DSM 792 / JCM 1419 / IAM 19013 / LMG 5710 / NBRC 13948 / NRRL B-527 / VKM B-1787 / 2291 / W)).